The sequence spans 310 residues: Protoheme IX farnesyltransferase (310 aa).

Helical transmembrane passes span 37-57 (LITV…DVLL), 64-84 (LTLL…CYLN), 113-133 (ILAL…IVNH), 134-154 (VAAV…TMWL), 159-181 (TINT…AAVT), 186-208 (IDAW…ALAM), 215-237 (RAAG…QIVW), 257-277 (MLVM…GLKI), and 290-310 (MFFF…LVSL).

This sequence belongs to the UbiA prenyltransferase family. Protoheme IX farnesyltransferase subfamily. As to quaternary structure, interacts with CtaA.

It localises to the cell membrane. It catalyses the reaction heme b + (2E,6E)-farnesyl diphosphate + H2O = Fe(II)-heme o + diphosphate. It participates in porphyrin-containing compound metabolism; heme O biosynthesis; heme O from protoheme: step 1/1. Its function is as follows. Converts heme B (protoheme IX) to heme O by substitution of the vinyl group on carbon 2 of heme B porphyrin ring with a hydroxyethyl farnesyl side group. This is Protoheme IX farnesyltransferase from Exiguobacterium sibiricum (strain DSM 17290 / CCUG 55495 / CIP 109462 / JCM 13490 / 255-15).